The primary structure comprises 277 residues: Uridine-cytidine kinase 1 (277 aa).

Positions 1–10 (MASAGGGDCE) are enriched in gly residues. The interval 1–29 (MASAGGGDCEGAGPEADRPHQRPFLIGVS) is disordered. Residue 30-38 (GGTASGKST) coordinates ATP. Residues D87, Y115, H120, R169, R178, and Q186 each coordinate substrate. Residue D215 participates in ATP binding. A disordered region spans residues 246 to 277 (RSHKRTFPEPGEHPAVLASGKRSHLESSSRPH). The residue at position 251 (T251) is a Phosphothreonine. Over residues 268–277 (SHLESSSRPH) the composition is skewed to basic and acidic residues.

Belongs to the uridine kinase family.

The enzyme catalyses uridine + ATP = UMP + ADP + H(+). It carries out the reaction cytidine + ATP = CMP + ADP + H(+). Its pathway is pyrimidine metabolism; CTP biosynthesis via salvage pathway; CTP from cytidine: step 1/3. It functions in the pathway pyrimidine metabolism; UMP biosynthesis via salvage pathway; UMP from uridine: step 1/1. Functionally, phosphorylates uridine and cytidine to uridine monophosphate and cytidine monophosphate. Does not phosphorylate deoxyribonucleosides or purine ribonucleosides. Can use ATP or GTP as a phosphate donor. The polypeptide is Uridine-cytidine kinase 1 (UCK1) (Bos taurus (Bovine)).